Reading from the N-terminus, the 144-residue chain is Large ribosomal subunit protein uL16 (144 aa).

Positions 1–16 (MLVPKRVKHRKVQRGH) are enriched in basic residues. Positions 1–20 (MLVPKRVKHRKVQRGHMRGE) are disordered.

It belongs to the universal ribosomal protein uL16 family. In terms of assembly, part of the 50S ribosomal subunit.

Binds 23S rRNA and is also seen to make contacts with the A and possibly P site tRNAs. This is Large ribosomal subunit protein uL16 from Limosilactobacillus reuteri (strain DSM 20016) (Lactobacillus reuteri).